Here is a 431-residue protein sequence, read N- to C-terminus: F-box protein pof14 (431 aa).

The F-box; atypical domain maps to 172–186 (CPDEILQLIFSYCYD).

Component of the E3 ubiquitin ligase Skp1-Cullin-1-F-box (SCF) complex. Interacts with skp1, cul1 and erg9.

Its subcellular location is the cytoplasm. It localises to the nucleus. It is found in the endoplasmic reticulum. Functionally, expression is induced during oxidative stress. Plays an essential, SCF-independent, role in the stress response to hydrogen peroxide for survival, by negatively regulating ergosterol synthesis via direct binding to the squalene synthase erg9. This is F-box protein pof14 (pof14) from Schizosaccharomyces pombe (strain 972 / ATCC 24843) (Fission yeast).